The chain runs to 262 residues: Homeobox-leucine zipper protein HOX24 (262 aa).

Disordered regions lie at residues 44–68 (AAGR…RKRR) and 162–189 (LNER…NSVM). The segment covering 46–62 (GRGGGDGDGGGGGGGGG) has biased composition (gly residues). The homeobox DNA-binding region spans 61-122 (GGGERKRRFT…NKRARWRSKQ (62 aa)). Residues 121 to 165 (KQIEHDYAALRAQYDALHARVESLRQEKLALAAQVDELRGKLNER) are leucine-zipper.

This sequence belongs to the HD-ZIP homeobox family. Class I subfamily. As to expression, expressed in roots and panicles.

The protein resides in the nucleus. Probable transcription factor. This chain is Homeobox-leucine zipper protein HOX24 (HOX24), found in Oryza sativa subsp. indica (Rice).